The sequence spans 361 residues: Mannose-1-phosphate guanyltransferase (361 aa).

It belongs to the transferase hexapeptide repeat family.

The protein resides in the cytoplasm. It catalyses the reaction alpha-D-mannose 1-phosphate + GTP + H(+) = GDP-alpha-D-mannose + diphosphate. It functions in the pathway nucleotide-sugar biosynthesis; GDP-alpha-D-mannose biosynthesis; GDP-alpha-D-mannose from alpha-D-mannose 1-phosphate (GTP route): step 1/1. In terms of biological role, involved in cell wall synthesis where it is required for glycosylation. Involved in cell cycle progression through cell-size checkpoint. In Kluyveromyces lactis (strain ATCC 8585 / CBS 2359 / DSM 70799 / NBRC 1267 / NRRL Y-1140 / WM37) (Yeast), this protein is Mannose-1-phosphate guanyltransferase (MPG1).